A 308-amino-acid polypeptide reads, in one-letter code: Malonate utilization transcriptional regulator (308 aa).

The 58-residue stretch at Ile9–Leu66 folds into the HTH lysR-type domain. Positions Ile26 to His45 form a DNA-binding region, H-T-H motif.

It belongs to the LysR transcriptional regulatory family.

Its function is as follows. Transcriptional regulator of the mau genes for malonate utilization. The chain is Malonate utilization transcriptional regulator (mauR) from Klebsiella pneumoniae.